The primary structure comprises 382 residues: 6-hydroxynicotinate 3-monooxygenase (382 aa).

Positions 1–25 (MRGRQKIAIVGAGLGGAAAATLLQQ) are cleaved as a signal peptide. FAD-binding positions include Gly15, 34–35 (EQ), His47, Arg108, and Leu130. His47 (proton acceptor) is an active-site residue. Tyr215 serves as the catalytic Proton acceptor. FAD contacts are provided by residues Asp294 and 307–308 (AC).

This sequence belongs to the 6-hydroxynicotinate 3-monooxygenase family. In terms of assembly, monomer. FAD is required as a cofactor.

It catalyses the reaction 6-hydroxynicotinate + NADH + O2 + 2 H(+) = 2,5-dihydroxypyridine + CO2 + NAD(+) + H2O. Its pathway is cofactor degradation; nicotinate degradation. Flavin-dependent monooxygenase (FMO) that catalyzes the decarboxylative hydroxylation of 6-hydroxynicotinic acid (6-HNA) to 2,5-dihydroxypyridine (2,5-DHP) with concomitant oxidation of NADH, a step in the aerobic nicotinate degradation pathway. This Pseudomonas putida (strain ATCC 47054 / DSM 6125 / CFBP 8728 / NCIMB 11950 / KT2440) protein is 6-hydroxynicotinate 3-monooxygenase.